We begin with the raw amino-acid sequence, 270 residues long: Formamidopyrimidine-DNA glycosylase (270 aa).

P2 serves as the catalytic Schiff-base intermediate with DNA. The active-site Proton donor is the E3. K58 serves as the catalytic Proton donor; for beta-elimination activity. Residues H90, R109, and R152 each coordinate DNA. The FPG-type zinc-finger motif lies at 237-270 (RVYGREGEACECGGAIVRVVQSGRSTFYCRKCQR). R260 serves as the catalytic Proton donor; for delta-elimination activity.

This sequence belongs to the FPG family. As to quaternary structure, monomer. The cofactor is Zn(2+).

The enzyme catalyses Hydrolysis of DNA containing ring-opened 7-methylguanine residues, releasing 2,6-diamino-4-hydroxy-5-(N-methyl)formamidopyrimidine.. The catalysed reaction is 2'-deoxyribonucleotide-(2'-deoxyribose 5'-phosphate)-2'-deoxyribonucleotide-DNA = a 3'-end 2'-deoxyribonucleotide-(2,3-dehydro-2,3-deoxyribose 5'-phosphate)-DNA + a 5'-end 5'-phospho-2'-deoxyribonucleoside-DNA + H(+). Functionally, involved in base excision repair of DNA damaged by oxidation or by mutagenic agents. Acts as a DNA glycosylase that recognizes and removes damaged bases. Has a preference for oxidized purines, such as 7,8-dihydro-8-oxoguanine (8-oxoG). Has AP (apurinic/apyrimidinic) lyase activity and introduces nicks in the DNA strand. Cleaves the DNA backbone by beta-delta elimination to generate a single-strand break at the site of the removed base with both 3'- and 5'-phosphates. This Sphingopyxis alaskensis (strain DSM 13593 / LMG 18877 / RB2256) (Sphingomonas alaskensis) protein is Formamidopyrimidine-DNA glycosylase.